A 193-amino-acid chain; its full sequence is Potassium-transporting ATPase KdpC subunit (193 aa).

The helical transmembrane segment at 9–29 threads the bilayer; sequence VLMTVVTTVLLGLVYPLLITG.

The protein belongs to the KdpC family. In terms of assembly, the system is composed of three essential subunits: KdpA, KdpB and KdpC.

Its subcellular location is the cell inner membrane. Part of the high-affinity ATP-driven potassium transport (or Kdp) system, which catalyzes the hydrolysis of ATP coupled with the electrogenic transport of potassium into the cytoplasm. This subunit acts as a catalytic chaperone that increases the ATP-binding affinity of the ATP-hydrolyzing subunit KdpB by the formation of a transient KdpB/KdpC/ATP ternary complex. The polypeptide is Potassium-transporting ATPase KdpC subunit (Koribacter versatilis (strain Ellin345)).